We begin with the raw amino-acid sequence, 430 residues long: MDERLLGPPPPGGGRGGLGLVSGEPGGPGEPPGGGDPGGGSGGVPGGRGKQDIGDILQQIMTITDQSLDEAQAKKHALNCHRMKPALFSVLCEIKEKTGLSIRSSQEEEPVDPQLMRLDNMLLAEGVAGPEKGGGSAAAAAAAAASGGGVSPDNSIEHSDYRSKLAQIRHIYHSELEKYEQACNEFTTHVMNLLREQSRTRPVAPKEMERMVSIIHRKFSAIQMQLKQSTCEAVMILRSRFLDARRKRRNFSKQATEVLNEYFYSHLSNPYPSEEAKEELAKKCGITVSQVSNWFGNKRIRYKKNIGKFQEEANIYAVKTAVSVTQGGHSRTSSPTPPSSAGSGGSFNLSGSGDMFLGMPGLNGDSYSASQVESLRHSMGPGGYGDNLGGGQMYSPREMRANGSWQEAVTPSSVTSPTEGPGSVHSDTSN.

The interval 1-52 (MDERLLGPPPPGGGRGGLGLVSGEPGGPGEPPGGGDPGGGSGGVPGGRGKQD) is disordered. Gly residues predominate over residues 13–48 (GGRGGLGLVSGEPGGPGEPPGGGDPGGGSGGVPGGR). The region spanning 48 to 243 (RGKQDIGDIL…VMILRSRFLD (196 aa)) is the PBC domain. Positions 55–134 (DILQQIMTIT…EGVAGPEKGG (80 aa)) are PBC-A. Phosphoserine occurs at positions 136, 151, and 159. A PBC-B region spans residues 137 to 243 (AAAAAAAAAS…VMILRSRFLD (107 aa)). Residues 244 to 306 (ARRKRRNFSK…NKRIRYKKNI (63 aa)) constitute a DNA-binding region (homeobox; TALE-type). Disordered stretches follow at residues 326–347 (QGGH…GGSF) and 378–430 (SMGP…DTSN). At S330 the chain carries Phosphoserine. The segment covering 380–392 (GPGGYGDNLGGGQ) has biased composition (gly residues). S395 bears the Phosphoserine mark. Polar residues predominate over residues 403-418 (GSWQEAVTPSSVTSPT).

The protein belongs to the TALE/PBX homeobox family. As to quaternary structure, forms heterodimers with MEIS1 and heterotrimers with MEIS1 and HOXA9. Interacts with PBXIP1. In terms of tissue distribution, ubiquitously expressed.

Its subcellular location is the nucleus. In terms of biological role, transcriptional activator that binds the sequence 5'-ATCAATCAA-3'. Activates transcription of PF4 in complex with MEIS1. This Homo sapiens (Human) protein is Pre-B-cell leukemia transcription factor 2 (PBX2).